The chain runs to 991 residues: Mediator of RNA polymerase II transcription subunit 5 (991 aa).

This sequence belongs to the Mediator complex subunit 5 family. In terms of assembly, component of the Mediator complex.

It is found in the nucleus. Its function is as follows. Component of the Mediator complex, a coactivator involved in the regulated transcription of nearly all RNA polymerase II-dependent genes. Mediator functions as a bridge to convey information from gene-specific regulatory proteins to the basal RNA polymerase II transcription machinery. Mediator is recruited to promoters by direct interactions with regulatory proteins and serves as a scaffold for the assembly of a functional preinitiation complex with RNA polymerase II and the general transcription factors. The protein is Mediator of RNA polymerase II transcription subunit 5 (NUT1) of Yarrowia lipolytica (strain CLIB 122 / E 150) (Yeast).